We begin with the raw amino-acid sequence, 622 residues long: Low affinity potassium transport system protein Kup (622 aa).

12 consecutive transmembrane segments (helical) span residues 9 to 29 (LPAI…TSPL), 49 to 69 (VFGF…IKYL), 103 to 123 (VIMG…TPAI), 137 to 157 (PQLD…LFMI), 165 to 185 (VGKL…VLGL), 213 to 233 (VSFI…ALYA), 247 to 267 (WFTV…ALLL), 276 to 296 (PFFL…AALA), 337 to 357 (IYIP…IVSF), 363 to 383 (LAAA…ILST), 396 to 416 (FVAL…SANL), and 419 to 439 (LLSG…IMTT).

Belongs to the HAK/KUP transporter (TC 2.A.72) family.

The protein localises to the cell inner membrane. It catalyses the reaction K(+)(in) + H(+)(in) = K(+)(out) + H(+)(out). In terms of biological role, responsible for the low-affinity transport of potassium into the cell. Likely operates as a K(+):H(+) symporter. The polypeptide is Low affinity potassium transport system protein Kup (Salmonella typhi).